A 447-amino-acid chain; its full sequence is Glycylpeptide N-tetradecanoyltransferase (447 aa).

Tetradecanoyl-CoA is bound by residues Tyr-38–Trp-41, Leu-171–Val-173, and Ser-179–Ala-183. Catalysis depends on Leu-447, which acts as the Proton acceptor; via carboxylate.

This sequence belongs to the NMT family. Monomer.

It localises to the cytoplasm. It carries out the reaction N-terminal glycyl-[protein] + tetradecanoyl-CoA = N-tetradecanoylglycyl-[protein] + CoA + H(+). In terms of biological role, adds a myristoyl group to the N-terminal glycine residue of certain cellular proteins. In Kluyveromyces lactis (strain ATCC 8585 / CBS 2359 / DSM 70799 / NBRC 1267 / NRRL Y-1140 / WM37) (Yeast), this protein is Glycylpeptide N-tetradecanoyltransferase (NMT1).